Here is a 160-residue protein sequence, read N- to C-terminus: D-aminoacyl-tRNA deacylase (160 aa).

A Gly-cisPro motif, important for rejection of L-amino acids motif is present at residues 146 to 147 (GP).

The protein belongs to the DTD family. Homodimer.

Its subcellular location is the cytoplasm. It carries out the reaction glycyl-tRNA(Ala) + H2O = tRNA(Ala) + glycine + H(+). The catalysed reaction is a D-aminoacyl-tRNA + H2O = a tRNA + a D-alpha-amino acid + H(+). Its function is as follows. An aminoacyl-tRNA editing enzyme that deacylates mischarged D-aminoacyl-tRNAs. Also deacylates mischarged glycyl-tRNA(Ala), protecting cells against glycine mischarging by AlaRS. Acts via tRNA-based rather than protein-based catalysis; rejects L-amino acids rather than detecting D-amino acids in the active site. By recycling D-aminoacyl-tRNA to D-amino acids and free tRNA molecules, this enzyme counteracts the toxicity associated with the formation of D-aminoacyl-tRNA entities in vivo and helps enforce protein L-homochirality. This Desulfovibrio desulfuricans (strain ATCC 27774 / DSM 6949 / MB) protein is D-aminoacyl-tRNA deacylase.